The sequence spans 494 residues: Trigger factor (494 aa).

A PPIase FKBP-type domain is found at 169-254 (GDRITMDYVG…VKDVAAPGAV (86 aa)). The tract at residues 440–494 (LLAEDEGEAKAETKKAAPKKKAAAKSEAAEAGEGEEAAPKKKAAPKKKASEDSAE) is disordered.

This sequence belongs to the FKBP-type PPIase family. Tig subfamily.

It localises to the cytoplasm. The enzyme catalyses [protein]-peptidylproline (omega=180) = [protein]-peptidylproline (omega=0). Its function is as follows. Involved in protein export. Acts as a chaperone by maintaining the newly synthesized protein in an open conformation. Functions as a peptidyl-prolyl cis-trans isomerase. The polypeptide is Trigger factor (Rhizobium etli (strain ATCC 51251 / DSM 11541 / JCM 21823 / NBRC 15573 / CFN 42)).